The sequence spans 176 residues: SsrA-binding protein (176 aa).

The tract at residues Met-1 to Ala-33 is disordered. The span at Ala-9–Lys-23 shows a compositional bias: basic residues.

The protein belongs to the SmpB family.

It is found in the cytoplasm. Its function is as follows. Required for rescue of stalled ribosomes mediated by trans-translation. Binds to transfer-messenger RNA (tmRNA), required for stable association of tmRNA with ribosomes. tmRNA and SmpB together mimic tRNA shape, replacing the anticodon stem-loop with SmpB. tmRNA is encoded by the ssrA gene; the 2 termini fold to resemble tRNA(Ala) and it encodes a 'tag peptide', a short internal open reading frame. During trans-translation Ala-aminoacylated tmRNA acts like a tRNA, entering the A-site of stalled ribosomes, displacing the stalled mRNA. The ribosome then switches to translate the ORF on the tmRNA; the nascent peptide is terminated with the 'tag peptide' encoded by the tmRNA and targeted for degradation. The ribosome is freed to recommence translation, which seems to be the essential function of trans-translation. The sequence is that of SsrA-binding protein from Rhodopirellula baltica (strain DSM 10527 / NCIMB 13988 / SH1).